The chain runs to 275 residues: Large ribosomal subunit protein uL2c (275 aa).

Residues 219-255 (TVRGSVMNPCDHPHGGGEGRAPIGRTRPLTPWGKPAL) form a disordered region.

It belongs to the universal ribosomal protein uL2 family. In terms of assembly, part of the 50S ribosomal subunit.

The protein localises to the plastid. Its subcellular location is the chloroplast. The chain is Large ribosomal subunit protein uL2c (rpl2) from Trieres chinensis (Marine centric diatom).